We begin with the raw amino-acid sequence, 217 residues long: MANHIYLAGDSTVQTYGDSTNQGGWGQFLGSHLPEHIQVINRAIGGRSSKTFVEEGRLQAILDVIEPDDWLFVQMGHNDASKNKPERYTEPYTTYKQYLKQYIAGAREKGAHPLLITPVARFHYENGVFLNDFPDYCIAMKQTAAEENVQLIDLMEKSLAFFTEKGEEKVYTYFMISEGINDYTHFTKKGANEMAKLVAKGIKELGLPLTESIIKER.

The Nucleophile role is filled by Ser11. Catalysis depends on residues Glu178 and His185.

It belongs to the 'GDSL' lipolytic enzyme family.

Its function is as follows. May play a role in the degradation of rhamnogalacturonan derived from plant cell walls. Probably has broad substrate specificity and may degrade several types of acetylated substrates. The polypeptide is Probable rhamnogalacturonan acetylesterase YesY (yesY) (Bacillus subtilis (strain 168)).